A 231-amino-acid polypeptide reads, in one-letter code: DNA damage response protein C (231 aa).

Homodimer.

It localises to the cytoplasm. Its subcellular location is the nucleoid. Appears to contribute to D.radiodurans capacity to survive exposure to ionizing radiation. Likely functions as a DNA damage-induced nucleoid-associated protein (NAP) that contributes to the enhanced level of nucleoid compaction after irradiation by bridging DNA duplexes, thereby limiting the dispersion of the fragmented genome immediately after irradiation to facilitate subsequent DNA repair. In vitro, binds both ssDNA and dsDNA, and is able to compact circular DNA, circularize linear DNA, anneal complementary DNA strands and protect DNA from nucleases. The sequence is that of DNA damage response protein C from Deinococcus radiodurans (strain ATCC 13939 / DSM 20539 / JCM 16871 / CCUG 27074 / LMG 4051 / NBRC 15346 / NCIMB 9279 / VKM B-1422 / R1).